The chain runs to 156 residues: Small ribosomal subunit protein uS7 (156 aa).

Belongs to the universal ribosomal protein uS7 family. As to quaternary structure, part of the 30S ribosomal subunit. Contacts proteins S9 and S11.

In terms of biological role, one of the primary rRNA binding proteins, it binds directly to 16S rRNA where it nucleates assembly of the head domain of the 30S subunit. Is located at the subunit interface close to the decoding center, probably blocks exit of the E-site tRNA. This chain is Small ribosomal subunit protein uS7, found in Ligilactobacillus salivarius (strain UCC118) (Lactobacillus salivarius).